Reading from the N-terminus, the 547-residue chain is Glucose-6-phosphate isomerase (547 aa).

Glu351 (proton donor) is an active-site residue. Residues His382 and Lys510 contribute to the active site.

Belongs to the GPI family.

Its subcellular location is the cytoplasm. It carries out the reaction alpha-D-glucose 6-phosphate = beta-D-fructose 6-phosphate. It functions in the pathway carbohydrate biosynthesis; gluconeogenesis. It participates in carbohydrate degradation; glycolysis; D-glyceraldehyde 3-phosphate and glycerone phosphate from D-glucose: step 2/4. Its function is as follows. Catalyzes the reversible isomerization of glucose-6-phosphate to fructose-6-phosphate. This Beijerinckia indica subsp. indica (strain ATCC 9039 / DSM 1715 / NCIMB 8712) protein is Glucose-6-phosphate isomerase.